The sequence spans 325 residues: 26S proteasome non-ATPase regulatory subunit 7 (325 aa).

In terms of domain architecture, MPN spans 8–142; that stretch reads TIVHPTVLLS…TKSYVTVEEI (135 aa). Residues 285-325 form a disordered region; that stretch reads KKADIINSTPPTTATSPSVADKGKEKEQNAFNGADKPSKQA. Over residues 292-302 the composition is skewed to low complexity; that stretch reads STPPTTATSPS.

Belongs to the peptidase M67A family.

Functionally, acts as a regulatory subunit of the 26S proteasome which is involved in the ATP-dependent degradation of ubiquitinated proteins. In Dictyostelium discoideum (Social amoeba), this protein is 26S proteasome non-ATPase regulatory subunit 7 (psmD7).